Consider the following 445-residue polypeptide: Maltoporin (445 aa).

The N-terminal stretch at 1 to 25 (MKMKAKWLPIAAGVTAALASQAAFA) is a signal peptide.

Belongs to the porin LamB (TC 1.B.3) family. In terms of assembly, homotrimer formed of three 18-stranded antiparallel beta-barrels, containing three independent channels.

Its subcellular location is the cell outer membrane. The enzyme catalyses beta-maltose(in) = beta-maltose(out). Functionally, involved in the transport of maltose and maltodextrins. The sequence is that of Maltoporin from Aeromonas salmonicida.